The primary structure comprises 681 residues: CAI-1 autoinducer sensor kinase/phosphatase CqsS (681 aa).

The next 4 helical transmembrane spans lie at 17–37 (LVGW…EFMF), 73–93 (AYYQ…MLLM), 112–132 (ILLV…IGLA), and 148–168 (MDWT…LFYF). A Histidine kinase domain is found at 187 to 413 (GIAHEMRNPL…QFTMTFPTIG (227 aa)). Position 190 is a phosphohistidine; by autocatalysis (H190). The Response regulatory domain maps to 564-681 (TIMVVDDNES…RLFDKIANWI (118 aa)). D613 carries the 4-aspartylphosphate modification.

The protein resides in the cell membrane. The enzyme catalyses ATP + protein L-histidine = ADP + protein N-phospho-L-histidine.. Its function is as follows. Senses the quorum-sensing autoinducer CAI-1 ((S)-3-hydroxytridecan-4-one) which probably functions as an intragenus signal. The sensory signal is then relayed to LuxU and LuxO. This Vibrio campbellii (strain ATCC BAA-1116) protein is CAI-1 autoinducer sensor kinase/phosphatase CqsS (cqsS).